A 417-amino-acid polypeptide reads, in one-letter code: Methyltransferase/ribosomally synthesized cyclic peptide omphalotin A precursor ophMA (417 aa).

The segment at Met1–Lys251 is methyltransferase domain. Residues Arg72, Tyr76, and Tyr98 contribute to the active site. Tyr98, His100, Val103, Ala130, Gln172, Ala213, Ser244, and Thr245 together coordinate S-adenosyl-L-methionine. The segment at Ala252 to Met378 is clasp domain. Residues Pro379 to Pro399 are precursor leader. 3 positions are modified to N-methylvaline: Val401, Val403, and Val404. At Gly405 the chain carries N-methylglycine. An N-methylvaline modification is found at Val406. Position 407 is an N-methylisoleucine (Ile407). Gly408 carries the N-methylglycine modification. Ile410 bears the N-methylisoleucine mark. Position 411 is an N-methylglycine (Gly411). Val413 carries the N-methylvaline modification.

In the N-terminal section; belongs to the precorrin methyltransferase family. As to quaternary structure, homodimer. Post-translationally, ophMA automethylates at Val-401, Val-403, Val-404, Gly-405, Val-406, Ile-407, Gly-408, Ile-410, Gly-411 and Val-413 before being processed by the prolyloligopeptidase ophP which likely forms a peptidyl ester upon removal of the follower propeptide, which then undergoes macrocyclization with the N-terminus of the modified core peptide. Peptide backbone alpha-N-methylations change the physicochemical properties of amide bonds to provide structural constraints and other favorable characteristics including biological membrane permeability to peptides.

Its pathway is mycotoxin biosynthesis. Fusion protein of the methyltransferase ophM and the omphalotin core peptide; part of the gene cluster that mediates the biosynthesis of omphalotin A, a highly methylated cyclic dodecapeptide with nematodicidal activity. Omphalotin A derives from the C-terminus of the ophMA protein, and it is the ophMA protein that methylates its own C-terminus using S-adenosyl methionine (SAM). The C-terminus is subsequently cleaved off and macrocyclized by the prolyloligopeptidase ophP to give the final product. In Omphalotus olearius (Jack o'lantern), this protein is Methyltransferase/ribosomally synthesized cyclic peptide omphalotin A precursor ophMA.